A 396-amino-acid polypeptide reads, in one-letter code: MRISIKKILDNESTAGIFLLAAAVFALIFSNVGFLHDIYRHFLELPIVIGVSDYKLDKPLEFWVNDALMAIFFFSIGLELKRERIEGQLRHFSQVFLPSFAAIGGVIFPAVIFAVINFSDSHALRGWAIPTATDIAFAVGVMALLGRRIPTSLKIFVLTLAIMDDLCAIVIIALFYSTALNFTYLGLAFVCFLVLLVMCKLKIPQKIPFVIMSILLWIFVLHSGIHATIAGVAAGFCIPINTSRGNSMLKEMESSLGYFVNYVVLPLFAFANAGVDMRGMQISYLFGPVPLGVMLGLFLGKQLGIFTFSWFLIKMNIVGMPDRANFKQLYAVAIICGIGFTMALFVDNLSYGGSDLYHHTDKLAILLGSIISGVVGYFVAKAVGNKPKKGIKNEYN.

11 helical membrane-spanning segments follow: residues 15-35 (AGIFLLAAAVFALIFSNVGFL), 60-80 (LEFWVNDALMAIFFFSIGLEL), 96-116 (FLPSFAAIGGVIFPAVIFAVI), 126-146 (GWAIPTATDIAFAVGVMALLG), 155-175 (IFVLTLAIMDDLCAIVIIALF), 179-199 (ALNFTYLGLAFVCFLVLLVMC), 207-227 (IPFVIMSILLWIFVLHSGIHA), 255-275 (SLGYFVNYVVLPLFAFANAGV), 290-312 (PLGVMLGLFLGKQLGIFTFSWFL), 329-349 (LYAVAIICGIGFTMALFVDNL), and 363-383 (LAILLGSIISGVVGYFVAKAV).

It belongs to the NhaA Na(+)/H(+) (TC 2.A.33) antiporter family.

The protein resides in the cell inner membrane. The enzyme catalyses Na(+)(in) + 2 H(+)(out) = Na(+)(out) + 2 H(+)(in). Functionally, na(+)/H(+) antiporter that extrudes sodium in exchange for external protons. This Campylobacter hominis (strain ATCC BAA-381 / DSM 21671 / CCUG 45161 / LMG 19568 / NCTC 13146 / CH001A) protein is Na(+)/H(+) antiporter NhaA 1.